We begin with the raw amino-acid sequence, 376 residues long: Erythronate-4-phosphate dehydrogenase (376 aa).

Residues Ser45 and Thr67 each contribute to the substrate site. Residue Asp147 coordinates NAD(+). Residue Arg209 is part of the active site. Residue Asp233 coordinates NAD(+). Glu238 is a catalytic residue. The active-site Proton donor is His255. Residue Gly258 coordinates NAD(+). Substrate is bound at residue Tyr259.

It belongs to the D-isomer specific 2-hydroxyacid dehydrogenase family. PdxB subfamily. Homodimer.

Its subcellular location is the cytoplasm. It catalyses the reaction 4-phospho-D-erythronate + NAD(+) = (R)-3-hydroxy-2-oxo-4-phosphooxybutanoate + NADH + H(+). Its pathway is cofactor biosynthesis; pyridoxine 5'-phosphate biosynthesis; pyridoxine 5'-phosphate from D-erythrose 4-phosphate: step 2/5. Functionally, catalyzes the oxidation of erythronate-4-phosphate to 3-hydroxy-2-oxo-4-phosphonooxybutanoate. The sequence is that of Erythronate-4-phosphate dehydrogenase from Shewanella sp. (strain ANA-3).